Reading from the N-terminus, the 473-residue chain is ATP synthase subunit beta 2 (473 aa).

An ATP-binding site is contributed by 158 to 165 (GGAGVGKT).

Belongs to the ATPase alpha/beta chains family. In terms of assembly, F-type ATPases have 2 components, CF(1) - the catalytic core - and CF(0) - the membrane proton channel. CF(1) has five subunits: alpha(3), beta(3), gamma(1), delta(1), epsilon(1). CF(0) has three main subunits: a(1), b(2) and c(9-12). The alpha and beta chains form an alternating ring which encloses part of the gamma chain. CF(1) is attached to CF(0) by a central stalk formed by the gamma and epsilon chains, while a peripheral stalk is formed by the delta and b chains.

It localises to the cell membrane. It catalyses the reaction ATP + H2O + 4 H(+)(in) = ADP + phosphate + 5 H(+)(out). Produces ATP from ADP in the presence of a proton gradient across the membrane. The catalytic sites are hosted primarily by the beta subunits. This is ATP synthase subunit beta 2 from Listeria welshimeri serovar 6b (strain ATCC 35897 / DSM 20650 / CCUG 15529 / CIP 8149 / NCTC 11857 / SLCC 5334 / V8).